The following is a 299-amino-acid chain: Porphobilinogen deaminase (299 aa).

Residue Cys-242 is modified to S-(dipyrrolylmethanemethyl)cysteine.

It belongs to the HMBS family. As to quaternary structure, monomer. Dipyrromethane is required as a cofactor.

It carries out the reaction 4 porphobilinogen + H2O = hydroxymethylbilane + 4 NH4(+). The protein operates within porphyrin-containing compound metabolism; protoporphyrin-IX biosynthesis; coproporphyrinogen-III from 5-aminolevulinate: step 2/4. Its function is as follows. Tetrapolymerization of the monopyrrole PBG into the hydroxymethylbilane pre-uroporphyrinogen in several discrete steps. The sequence is that of Porphobilinogen deaminase from Rickettsia typhi (strain ATCC VR-144 / Wilmington).